The following is a 316-amino-acid chain: NADH-quinone oxidoreductase subunit H (316 aa).

Transmembrane regions (helical) follow at residues 6-26 (PAVVIGILLSTVIVAAWLIWV), 74-94 (FVIAPAIVMVTMLLGFVVVPF), 98-118 (VGVIDFNFGLLYFFALSSLAV), 145-165 (ISYEVFMGLAAMGVVMLAGSF), 177-197 (GWYVLPQFAGFLAFLVAAVAE), 233-253 (YLGITLNSAILVTLFFGGWLG), 256-276 (FLPPLAWFILKTLVFILFFIL), and 296-316 (VMLPLTLANIVVTGAVGLSVP).

It belongs to the complex I subunit 1 family. In terms of assembly, NDH-1 is composed of 14 different subunits. Subunits NuoA, H, J, K, L, M, N constitute the membrane sector of the complex.

Its subcellular location is the cell inner membrane. It carries out the reaction a quinone + NADH + 5 H(+)(in) = a quinol + NAD(+) + 4 H(+)(out). Its function is as follows. NDH-1 shuttles electrons from NADH, via FMN and iron-sulfur (Fe-S) centers, to quinones in the respiratory chain. The immediate electron acceptor for the enzyme in this species is believed to be ubiquinone. Couples the redox reaction to proton translocation (for every two electrons transferred, four hydrogen ions are translocated across the cytoplasmic membrane), and thus conserves the redox energy in a proton gradient. This subunit may bind ubiquinone. The chain is NADH-quinone oxidoreductase subunit H from Methylococcus capsulatus (strain ATCC 33009 / NCIMB 11132 / Bath).